Here is a 199-residue protein sequence, read N- to C-terminus: dITP/XTP pyrophosphatase (199 aa).

12–17 is a binding site for substrate; sequence SGNAGK. The active-site Proton acceptor is the Asp-73. Asp-73 contributes to the Mg(2+) binding site. Substrate contacts are provided by residues Ser-74, 157–160, Lys-180, and 185–186; these read FGYD and HR.

The protein belongs to the HAM1 NTPase family. As to quaternary structure, homodimer. The cofactor is Mg(2+).

It carries out the reaction XTP + H2O = XMP + diphosphate + H(+). The catalysed reaction is dITP + H2O = dIMP + diphosphate + H(+). It catalyses the reaction ITP + H2O = IMP + diphosphate + H(+). In terms of biological role, pyrophosphatase that catalyzes the hydrolysis of nucleoside triphosphates to their monophosphate derivatives, with a high preference for the non-canonical purine nucleotides XTP (xanthosine triphosphate), dITP (deoxyinosine triphosphate) and ITP. Seems to function as a house-cleaning enzyme that removes non-canonical purine nucleotides from the nucleotide pool, thus preventing their incorporation into DNA/RNA and avoiding chromosomal lesions. This is dITP/XTP pyrophosphatase from Neisseria meningitidis serogroup B (strain ATCC BAA-335 / MC58).